A 193-amino-acid chain; its full sequence is MRLLEERILADGTVLGETILKVDQFLTHQVDYRLMKEIGRVFADQYADLGITKVVTIEASGIAPAVYTAEALEVPMIFAKKHKNITMTEGILTAEVYSFTKQVTSTVSIAGGLLSKEDRVLIIDDFLANGQAAKGLIDIIHQAGAKAVGIGIVIEKSFQAGRQLLEDLGVEVTSLARIKHFDNGIVSFLEADA.

Xanthine-binding residues include Leu20 and Thr27. 128–132 (ANGQA) is a 5-phospho-alpha-D-ribose 1-diphosphate binding site. Lys156 lines the xanthine pocket.

Belongs to the purine/pyrimidine phosphoribosyltransferase family. Xpt subfamily. As to quaternary structure, homodimer.

It is found in the cytoplasm. The catalysed reaction is XMP + diphosphate = xanthine + 5-phospho-alpha-D-ribose 1-diphosphate. It participates in purine metabolism; XMP biosynthesis via salvage pathway; XMP from xanthine: step 1/1. In terms of biological role, converts the preformed base xanthine, a product of nucleic acid breakdown, to xanthosine 5'-monophosphate (XMP), so it can be reused for RNA or DNA synthesis. The protein is Xanthine phosphoribosyltransferase of Streptococcus equi subsp. equi (strain 4047).